Consider the following 396-residue polypeptide: Putative cyclin-B3-1 (396 aa).

The interval 1-98 is disordered; it reads MLRDGNKQSK…KVLDVTAKPK (98 aa). Residues 21–32 are compositionally biased toward polar residues; that stretch reads KTTVKTSLQNRS. Low complexity predominate over residues 39-57; the sequence is VGRSKSRSISSIPSSAVAS. Positions 76-85 are enriched in polar residues; sequence GESSSSGNKD.

Belongs to the cyclin family. Cyclin AB subfamily.

This chain is Putative cyclin-B3-1 (CYCB3-1), found in Arabidopsis thaliana (Mouse-ear cress).